The sequence spans 243 residues: Pyridoxine 5'-phosphate synthase (243 aa).

Asn-9 provides a ligand contact to 3-amino-2-oxopropyl phosphate. Residue 11-12 (DH) coordinates 1-deoxy-D-xylulose 5-phosphate. A 3-amino-2-oxopropyl phosphate-binding site is contributed by Arg-20. The Proton acceptor role is filled by His-45. 2 residues coordinate 1-deoxy-D-xylulose 5-phosphate: Arg-47 and His-52. Glu-72 acts as the Proton acceptor in catalysis. Thr-102 is a binding site for 1-deoxy-D-xylulose 5-phosphate. His-193 functions as the Proton donor in the catalytic mechanism. Residues Gly-194 and 215 to 216 (GH) each bind 3-amino-2-oxopropyl phosphate.

It belongs to the PNP synthase family. In terms of assembly, homooctamer; tetramer of dimers.

The protein localises to the cytoplasm. It catalyses the reaction 3-amino-2-oxopropyl phosphate + 1-deoxy-D-xylulose 5-phosphate = pyridoxine 5'-phosphate + phosphate + 2 H2O + H(+). It participates in cofactor biosynthesis; pyridoxine 5'-phosphate biosynthesis; pyridoxine 5'-phosphate from D-erythrose 4-phosphate: step 5/5. Functionally, catalyzes the complicated ring closure reaction between the two acyclic compounds 1-deoxy-D-xylulose-5-phosphate (DXP) and 3-amino-2-oxopropyl phosphate (1-amino-acetone-3-phosphate or AAP) to form pyridoxine 5'-phosphate (PNP) and inorganic phosphate. The polypeptide is Pyridoxine 5'-phosphate synthase (Pseudoalteromonas translucida (strain TAC 125)).